A 211-amino-acid chain; its full sequence is Thymidylate kinase (211 aa).

Residue 7 to 14 coordinates ATP; that stretch reads GMDGSGKT.

Belongs to the thymidylate kinase family.

It carries out the reaction dTMP + ATP = dTDP + ADP. Phosphorylation of dTMP to form dTDP in both de novo and salvage pathways of dTTP synthesis. This Mesoplasma florum (strain ATCC 33453 / NBRC 100688 / NCTC 11704 / L1) (Acholeplasma florum) protein is Thymidylate kinase.